A 417-amino-acid polypeptide reads, in one-letter code: MDAAVIGLQWGDEGKGKIVDHLAGDFDSVVRFNGGNNAGHTVIVGERTYKLRVLPSGILREDVVSVIGNGVVLDPQGLLDEIHLLKKEGVQIHPGKLLIADNCHLVLPIHRELDVLFEQKQKLGTTKCGIGPCYQDKVARRGIRLCDLRSEEQLRKTLAGLSYYHNIVRKGAGLQEVCQEILFASLFAMRDELLCYAVPPCELQGILSGKSKLYEGAQGMLLDIDHGTYPFVTSGSSGLGQVMNGAALGCVNRVIGVMKGYVTRVGEGILPTEQDNAFGSELQKLGKEVGTVSGRIRRCGWCDLPLVRYVNAVAGVTEIVITKLDVLDSFNEIFLCCAYKGKKGKLIEICSPSKLCYSKYEAQYIVMKGWRSSTVGVTSFCDLPDGAKSFVETIEKCLDLPVTMISNGPERTQVLHR.

GTP is bound by residues 11-17 (GDEGKGK) and 39-41 (GHT). D12 serves as the catalytic Proton acceptor. Residues D12 and G39 each contribute to the Mg(2+) site. Residues 12–15 (DEGK), 37–40 (NAGH), T126, R140, Q218, T233, and R295 each bind IMP. The active-site Proton donor is H40. 291–297 (TVSGRIR) contacts substrate. Residues R297, 323–325 (KLD), and 406–408 (SNG) contribute to the GTP site.

This sequence belongs to the adenylosuccinate synthetase family. In terms of assembly, homodimer. Mg(2+) serves as cofactor.

It localises to the cytoplasm. It catalyses the reaction IMP + L-aspartate + GTP = N(6)-(1,2-dicarboxyethyl)-AMP + GDP + phosphate + 2 H(+). Its pathway is purine metabolism; AMP biosynthesis via de novo pathway; AMP from IMP: step 1/2. Functionally, plays an important role in the de novo pathway of purine nucleotide biosynthesis. Catalyzes the first committed step in the biosynthesis of AMP from IMP. The chain is Adenylosuccinate synthetase from Neorickettsia sennetsu (strain ATCC VR-367 / Miyayama) (Ehrlichia sennetsu).